Reading from the N-terminus, the 187-residue chain is Probable chorismate pyruvate-lyase (187 aa).

Residues R81, L119, and E178 each contribute to the substrate site.

This sequence belongs to the UbiC family.

Its subcellular location is the cytoplasm. It catalyses the reaction chorismate = 4-hydroxybenzoate + pyruvate. Its pathway is cofactor biosynthesis; ubiquinone biosynthesis. In terms of biological role, removes the pyruvyl group from chorismate, with concomitant aromatization of the ring, to provide 4-hydroxybenzoate (4HB) for the ubiquinone pathway. This chain is Probable chorismate pyruvate-lyase, found in Thiobacillus denitrificans (strain ATCC 25259 / T1).